The primary structure comprises 360 residues: UDP-3-O-acylglucosamine N-acyltransferase (360 aa).

The Proton acceptor role is filled by His-256. A disordered region spans residues Glu-341 to Gly-360. Residues Ala-349–Gly-360 show a composition bias toward basic and acidic residues.

It belongs to the transferase hexapeptide repeat family. LpxD subfamily. In terms of assembly, homotrimer.

It catalyses the reaction a UDP-3-O-[(3R)-3-hydroxyacyl]-alpha-D-glucosamine + a (3R)-hydroxyacyl-[ACP] = a UDP-2-N,3-O-bis[(3R)-3-hydroxyacyl]-alpha-D-glucosamine + holo-[ACP] + H(+). Its pathway is bacterial outer membrane biogenesis; LPS lipid A biosynthesis. Functionally, catalyzes the N-acylation of UDP-3-O-acylglucosamine using 3-hydroxyacyl-ACP as the acyl donor. Is involved in the biosynthesis of lipid A, a phosphorylated glycolipid that anchors the lipopolysaccharide to the outer membrane of the cell. This Rhodopseudomonas palustris (strain TIE-1) protein is UDP-3-O-acylglucosamine N-acyltransferase.